Here is a 426-residue protein sequence, read N- to C-terminus: Histidine--tRNA ligase (426 aa).

This sequence belongs to the class-II aminoacyl-tRNA synthetase family. Homodimer.

Its subcellular location is the cytoplasm. It catalyses the reaction tRNA(His) + L-histidine + ATP = L-histidyl-tRNA(His) + AMP + diphosphate + H(+). The protein is Histidine--tRNA ligase of Streptococcus equi subsp. equi (strain 4047).